Reading from the N-terminus, the 564-residue chain is Potassium-transporting ATPase potassium-binding subunit (564 aa).

The next 10 helical transmembrane spans lie at 4 to 24 (HEIL…PFLG), 67 to 87 (TLAL…ILML), 135 to 155 (VGLT…LVAL), 179 to 199 (LYVL…QGVP), 258 to 278 (FEVA…GHYV), 286 to 306 (AILG…LWAE), 376 to 396 (IFGG…IAVF), 420 to 440 (LLVF…AIAA), 487 to 507 (LMIG…ILAI), and 528 to 548 (GPLF…LTFL).

The protein belongs to the KdpA family. In terms of assembly, the system is composed of three essential subunits: KdpA, KdpB and KdpC.

It localises to the cell inner membrane. Its function is as follows. Part of the high-affinity ATP-driven potassium transport (or Kdp) system, which catalyzes the hydrolysis of ATP coupled with the electrogenic transport of potassium into the cytoplasm. This subunit binds the periplasmic potassium ions and delivers the ions to the membrane domain of KdpB through an intramembrane tunnel. The protein is Potassium-transporting ATPase potassium-binding subunit of Pseudomonas aeruginosa (strain ATCC 15692 / DSM 22644 / CIP 104116 / JCM 14847 / LMG 12228 / 1C / PRS 101 / PAO1).